The sequence spans 137 residues: Nucleoside diphosphate kinase (137 aa).

ATP-binding residues include K9, F57, R85, T91, R102, and N112. The Pros-phosphohistidine intermediate role is filled by H115.

It belongs to the NDK family. In terms of assembly, homotetramer. Mg(2+) serves as cofactor.

Its subcellular location is the cytoplasm. It catalyses the reaction a 2'-deoxyribonucleoside 5'-diphosphate + ATP = a 2'-deoxyribonucleoside 5'-triphosphate + ADP. The enzyme catalyses a ribonucleoside 5'-diphosphate + ATP = a ribonucleoside 5'-triphosphate + ADP. In terms of biological role, major role in the synthesis of nucleoside triphosphates other than ATP. The ATP gamma phosphate is transferred to the NDP beta phosphate via a ping-pong mechanism, using a phosphorylated active-site intermediate. The protein is Nucleoside diphosphate kinase of Campylobacter jejuni subsp. doylei (strain ATCC BAA-1458 / RM4099 / 269.97).